The following is a 430-amino-acid chain: Enolase (430 aa).

Glutamine 163 serves as a coordination point for (2R)-2-phosphoglycerate. Residue glutamate 205 is the Proton donor of the active site. Residues aspartate 242, glutamate 288, and aspartate 315 each contribute to the Mg(2+) site. (2R)-2-phosphoglycerate-binding residues include lysine 340, arginine 369, serine 370, and lysine 391. Residue lysine 340 is the Proton acceptor of the active site.

Belongs to the enolase family. The cofactor is Mg(2+).

The protein localises to the cytoplasm. It localises to the secreted. The protein resides in the cell surface. It carries out the reaction (2R)-2-phosphoglycerate = phosphoenolpyruvate + H2O. Its pathway is carbohydrate degradation; glycolysis; pyruvate from D-glyceraldehyde 3-phosphate: step 4/5. Functionally, catalyzes the reversible conversion of 2-phosphoglycerate (2-PG) into phosphoenolpyruvate (PEP). It is essential for the degradation of carbohydrates via glycolysis. The protein is Enolase of Phytoplasma australiense.